A 1044-amino-acid polypeptide reads, in one-letter code: Spindle assembly checkpoint serine/threonine-protein kinase bub1 (1044 aa).

The 169-residue stretch at 36–204 (FQEELDIIEE…SSPFPPPRIV (169 aa)) folds into the BUB1 N-terminal domain. 5 disordered regions span residues 209–259 (PVSS…PLLY), 317–343 (VHHD…TPTR), 404–446 (ESLE…SQEE), 484–555 (KNSN…DSNS), and 685–705 (IKPK…SLDG). The segment covering 223–239 (QVFSDASSSRDSQNASD) has biased composition (polar residues). Residues 430–442 (NSSNSGATSLTGR) show a composition bias toward polar residues. Over residues 504 to 518 (STLQEETATGTTSTT) the composition is skewed to low complexity. Positions 544–555 (RSPQYSTVDSNS) are enriched in polar residues. Phosphothreonine is present on Thr-550. The 327-residue stretch at 718–1044 (LSVISKLGQG…LLKSIEKRKI (327 aa)) folds into the Protein kinase domain. ATP contacts are provided by Ala-728, Phe-729, Ala-730, Lys-762, and Asp-809. Asp-861 (proton acceptor) is an active-site residue. Residues Asp-865, Asn-866, and Asp-900 each coordinate ATP.

It belongs to the protein kinase superfamily. Ser/Thr protein kinase family. BUB1 subfamily. As to quaternary structure, part of the BUB1-BUB3 complex, composed of bub1 and bub3. Interacts with spc7 (when phosphorylated on MELT motifs); to recruit the bub1-bub3 complex to kinetochores. Interacts with mad3. In terms of processing, autophosphorylated.

The protein localises to the nucleus. It is found in the chromosome. It localises to the centromere. Its subcellular location is the kinetochore. The catalysed reaction is L-seryl-[protein] + ATP = O-phospho-L-seryl-[protein] + ADP + H(+). It catalyses the reaction L-threonyl-[protein] + ATP = O-phospho-L-threonyl-[protein] + ADP + H(+). Functionally, involved in mitotic spindle assembly checkpoint signaling, a process that delays anaphase until chromosomes are bioriented on the spindle, and in the repair of incorrect mitotic kinetochore-spindle microtubule attachments. Acts as a kinetochore scaffold for the recruitment of other spindle assembly checkpoint components. This Schizosaccharomyces pombe (strain 972 / ATCC 24843) (Fission yeast) protein is Spindle assembly checkpoint serine/threonine-protein kinase bub1.